We begin with the raw amino-acid sequence, 372 residues long: Heat-inducible transcription repressor HrcA (372 aa).

The segment at V296–M331 is disordered.

Belongs to the HrcA family.

In terms of biological role, negative regulator of class I heat shock genes (grpE-dnaK-dnaJ and groELS operons). Prevents heat-shock induction of these operons. This Bifidobacterium longum subsp. infantis (strain ATCC 15697 / DSM 20088 / JCM 1222 / NCTC 11817 / S12) protein is Heat-inducible transcription repressor HrcA.